A 600-amino-acid polypeptide reads, in one-letter code: MIKENLENELKTLPNSAGVYQYFNQEGKLLYVGKAKNLKNRVKSYFAFTPNLHANPRNSLRIQKMIEETVHLEFIATNSEADALILENSFIKQLHPKYNILLRDDKTYPYIYVDFEEEFPRFEITRKLVKKSKIKYFGPFFKGARELLDALYLYYPLKQKASCKSPCIFYQISRCLAPCDKLISREKYLEILDEAIHALLNPSVLLKNLEKQMLVLAQNENYEEAAKVRDQIAMIKDLEVKVEIDIAKLEDFEVFALAFKNSVLSTLRFVVQNGKIISANSKITPIRNDIQWDQNEIYKQLILENFSMDIPLLANVIYVYEEFEDRVLLEEILSQRFDKKISIKIPKIGEKRRICDLAFQNALLNIEKEQKNHDFTIQKELKFYFELENLPNDIEIFDNSHLQGVANVGAMVTYRINSWDKSKYRKFHLKHKNDYDQMREVLTRRALDFDKIPPPDLWLIDGGKALLDLAKEIIVSSGANVDILAISKEKIDAKAHRAKGGAKDKIHSLKGEFSLSINDKKLQFLQKLRDEAHRFAISFHQNTKKKQDLKSSKLANLGLSSGVIQKLLAYYGNFESIYKADFKDLTMLVGRKAAQKIKEN.

The region spanning 15-100 (NSAGVYQYFN…IKQLHPKYNI (86 aa)) is the GIY-YIG domain. Residues 203-238 (SVLLKNLEKQMLVLAQNENYEEAAKVRDQIAMIKDL) enclose the UVR domain.

Belongs to the UvrC family. Interacts with UvrB in an incision complex.

The protein resides in the cytoplasm. The UvrABC repair system catalyzes the recognition and processing of DNA lesions. UvrC both incises the 5' and 3' sides of the lesion. The N-terminal half is responsible for the 3' incision and the C-terminal half is responsible for the 5' incision. This is UvrABC system protein C from Campylobacter jejuni (strain RM1221).